The chain runs to 144 residues: Flagellar assembly factor FliW (144 aa).

It belongs to the FliW family. In terms of assembly, monomer. One copy interacts with the each alpha-helical wing of the CsrA homodimer, yielding a FliW-CsrA(2)-FliW complex. Comparison with a CsrA-mRNA structure (2JPP) suggests CsrA cannot bind both mRNA and FliW at the same time. Interacts with flagellin.

It localises to the cytoplasm. Functionally, acts as an anti-CsrA protein, binds CsrA and prevents it from repressing translation of its target genes, one of which is flagellin. Binds to flagellin and participates in the assembly of the flagellum. Its function is as follows. Allosterically inhibits CsrA binding to mRNA in a non-competitive fashion by preventing CsrA binding to the 5'-UTR. The chain is Flagellar assembly factor FliW from Geobacillus thermodenitrificans (strain NG80-2).